We begin with the raw amino-acid sequence, 163 residues long: Endoribonuclease YbeY (163 aa).

Zn(2+)-binding residues include H116, H120, and H126.

It belongs to the endoribonuclease YbeY family. Zn(2+) is required as a cofactor.

Its subcellular location is the cytoplasm. Functionally, single strand-specific metallo-endoribonuclease involved in late-stage 70S ribosome quality control and in maturation of the 3' terminus of the 16S rRNA. The protein is Endoribonuclease YbeY of Idiomarina loihiensis (strain ATCC BAA-735 / DSM 15497 / L2-TR).